The chain runs to 241 residues: 15,16-dihydrobiliverdin:ferredoxin oxidoreductase (241 aa).

The disordered stretch occupies residues 16–35 (RGGQPAAVPEGLEHCHSSKS).

This sequence belongs to the HY2 family.

It carries out the reaction 15,16-dihydrobiliverdin + oxidized 2[4Fe-4S]-[ferredoxin] = biliverdin IXalpha + reduced 2[4Fe-4S]-[ferredoxin] + 2 H(+). Its function is as follows. Catalyzes the two-electron reduction of biliverdin IX-alpha at the C15 methine bridge. The polypeptide is 15,16-dihydrobiliverdin:ferredoxin oxidoreductase (Synechococcus sp. (strain WH7803)).